The sequence spans 406 residues: Argininosuccinate synthase (406 aa).

ATP-binding positions include 10–18 (AYSGGLDTS) and Ala-37. L-citrulline is bound by residues Tyr-88 and Ser-93. Position 118 (Gly-118) interacts with ATP. The L-aspartate site is built by Thr-120, Asn-124, and Asp-125. L-citrulline is bound at residue Asn-124. Positions 128, 179, 188, 264, and 276 each coordinate L-citrulline.

The protein belongs to the argininosuccinate synthase family. Type 1 subfamily. Homotetramer.

It is found in the cytoplasm. The catalysed reaction is L-citrulline + L-aspartate + ATP = 2-(N(omega)-L-arginino)succinate + AMP + diphosphate + H(+). The protein operates within amino-acid biosynthesis; L-arginine biosynthesis; L-arginine from L-ornithine and carbamoyl phosphate: step 2/3. The polypeptide is Argininosuccinate synthase (Roseobacter denitrificans (strain ATCC 33942 / OCh 114) (Erythrobacter sp. (strain OCh 114))).